A 528-amino-acid polypeptide reads, in one-letter code: Benzoylformate decarboxylase (528 aa).

Mg(2+) contacts are provided by Gln117 and Leu118. The segment at 377–460 is thiamine pyrophosphate binding; sequence TSTVTAFWQR…IILKNGTYGA (84 aa). Ca(2+) contacts are provided by Asp428, Asn455, and Thr457.

Belongs to the TPP enzyme family. Homotetramer. Ca(2+) serves as cofactor. Thiamine diphosphate is required as a cofactor. It depends on Mg(2+) as a cofactor.

It carries out the reaction phenylglyoxylate + H(+) = benzaldehyde + CO2. The protein operates within aromatic compound metabolism; (R)-mandelate degradation; benzoate from (R)-mandelate: step 3/4. This chain is Benzoylformate decarboxylase (mdlC), found in Pseudomonas aeruginosa (strain ATCC 15692 / DSM 22644 / CIP 104116 / JCM 14847 / LMG 12228 / 1C / PRS 101 / PAO1).